The sequence spans 326 residues: 4-hydroxythreonine-4-phosphate dehydrogenase (326 aa).

Substrate is bound at residue T132. Positions 160, 205, and 260 each coordinate a divalent metal cation. Substrate contacts are provided by K268, N277, and R286.

Belongs to the PdxA family. Homodimer. The cofactor is Zn(2+). Mg(2+) serves as cofactor. Requires Co(2+) as cofactor.

The protein resides in the cytoplasm. It carries out the reaction 4-(phosphooxy)-L-threonine + NAD(+) = 3-amino-2-oxopropyl phosphate + CO2 + NADH. Its pathway is cofactor biosynthesis; pyridoxine 5'-phosphate biosynthesis; pyridoxine 5'-phosphate from D-erythrose 4-phosphate: step 4/5. Functionally, catalyzes the NAD(P)-dependent oxidation of 4-(phosphooxy)-L-threonine (HTP) into 2-amino-3-oxo-4-(phosphooxy)butyric acid which spontaneously decarboxylates to form 3-amino-2-oxopropyl phosphate (AHAP). This Stenotrophomonas maltophilia (strain R551-3) protein is 4-hydroxythreonine-4-phosphate dehydrogenase.